The sequence spans 248 residues: 14-3-3 protein homolog 2 (248 aa).

Belongs to the 14-3-3 family.

The protein is 14-3-3 protein homolog 2 of Echinococcus multilocularis (Fox tapeworm).